Reading from the N-terminus, the 103-residue chain is Large ribosomal subunit protein bL21 (103 aa).

The protein belongs to the bacterial ribosomal protein bL21 family. As to quaternary structure, part of the 50S ribosomal subunit. Contacts protein L20.

In terms of biological role, this protein binds to 23S rRNA in the presence of protein L20. The chain is Large ribosomal subunit protein bL21 from Treponema denticola (strain ATCC 35405 / DSM 14222 / CIP 103919 / JCM 8153 / KCTC 15104).